We begin with the raw amino-acid sequence, 148 residues long: Leghemoglobin 2 (148 aa).

In terms of domain architecture, Globin spans 2–148 (GFTEKQEALV…LSAAIKKAMS (147 aa)). A Nitrated tyrosine modification is found at Tyr30. Ser45 contacts heme b. A Phosphoserine modification is found at Ser45. Residue His63 coordinates O2. Residues Lys66, His95, and Lys98 each contribute to the heme b site. Tyr136 carries the nitrated tyrosine modification.

It belongs to the plant globin family. In terms of assembly, monomer. Nitrated in effective nodules and particularly in hypoxic conditions; this mechanism may play a protective role in the symbiosis by buffering toxic peroxynitrite NO(2)(-). Nitration level decrease during nodule senescence. In terms of processing, phosphorylation at Ser-45 disrupts the molecular environment of its porphyrin ring oxygen binding pocket, thus leading to a reduced oxygen consumption and to the delivery of oxygen O(2) to symbiosomes. In terms of tissue distribution, stem nodules.

The protein localises to the cytoplasm. The protein resides in the cytosol. Its subcellular location is the nucleus. Its function is as follows. Leghemoglobin that reversibly binds oxygen O(2) through a pentacoordinated heme iron. In stem nodules, facilitates the diffusion of oxygen to the bacteroids while preventing the bacterial nitrogenase from being inactivated by buffering dioxygen, nitric oxide and carbon monoxide, and promoting the formation of reactive oxygen species (ROS, e.g. H(2)O(2)). This role is essential for symbiotic nitrogen fixation (SNF). This chain is Leghemoglobin 2, found in Sesbania rostrata.